Reading from the N-terminus, the 97-residue chain is Protein SENESCENCE-ASSOCIATED GENE 21, mitochondrial (97 aa).

The transit peptide at 1 to 46 (MARSISNVKIVSAFVSRELSNAIFRRGYAATAAQGSVSSGGRSGAV) directs the protein to the mitochondrion.

The protein belongs to the LEA type 3 family. In terms of tissue distribution, expressed in roots, stems leaves and flowers, but not in seeds. In short days, observed in cotyledons and roots but absent from rosette leaves.

It localises to the mitochondrion. In terms of biological role, mediates tolerance to oxidative stresses (e.g. hydrogen peroxide H(2)O(2), diamide, menadione and tert-butyl hydroperoxide) by minimizing the negative effects of oxidation and monitoring photosynthesis during stress. Promotes root development. Prevents premature aging (e.g. senescence and flowering). Involved in resistance against compatible pathogens such as Botrytis cinerea and Pseudomonas syringae pv. tomato. In Arabidopsis thaliana (Mouse-ear cress), this protein is Protein SENESCENCE-ASSOCIATED GENE 21, mitochondrial.